Here is a 211-residue protein sequence, read N- to C-terminus: ATP-dependent Clp protease proteolytic subunit (211 aa).

Residue serine 106 is the Nucleophile of the active site. Histidine 131 is a catalytic residue.

It belongs to the peptidase S14 family. Fourteen ClpP subunits assemble into 2 heptameric rings which stack back to back to give a disk-like structure with a central cavity, resembling the structure of eukaryotic proteasomes.

Its subcellular location is the cytoplasm. The enzyme catalyses Hydrolysis of proteins to small peptides in the presence of ATP and magnesium. alpha-casein is the usual test substrate. In the absence of ATP, only oligopeptides shorter than five residues are hydrolyzed (such as succinyl-Leu-Tyr-|-NHMec, and Leu-Tyr-Leu-|-Tyr-Trp, in which cleavage of the -Tyr-|-Leu- and -Tyr-|-Trp bonds also occurs).. In terms of biological role, cleaves peptides in various proteins in a process that requires ATP hydrolysis. Has a chymotrypsin-like activity. Plays a major role in the degradation of misfolded proteins. The protein is ATP-dependent Clp protease proteolytic subunit of Nitrobacter hamburgensis (strain DSM 10229 / NCIMB 13809 / X14).